A 151-amino-acid chain; its full sequence is Large ribosomal subunit protein bL9 (151 aa).

Belongs to the bacterial ribosomal protein bL9 family.

Functionally, binds to the 23S rRNA. In Mycoplasmopsis agalactiae (strain NCTC 10123 / CIP 59.7 / PG2) (Mycoplasma agalactiae), this protein is Large ribosomal subunit protein bL9.